Reading from the N-terminus, the 359-residue chain is Aminomethyltransferase (359 aa).

This sequence belongs to the GcvT family. In terms of assembly, the glycine cleavage system is composed of four proteins: P, T, L and H.

The enzyme catalyses N(6)-[(R)-S(8)-aminomethyldihydrolipoyl]-L-lysyl-[protein] + (6S)-5,6,7,8-tetrahydrofolate = N(6)-[(R)-dihydrolipoyl]-L-lysyl-[protein] + (6R)-5,10-methylene-5,6,7,8-tetrahydrofolate + NH4(+). Functionally, the glycine cleavage system catalyzes the degradation of glycine. This is Aminomethyltransferase from Alcanivorax borkumensis (strain ATCC 700651 / DSM 11573 / NCIMB 13689 / SK2).